The following is a 105-amino-acid chain: Nitrogenase-stabilizing/protective protein NifW (105 aa).

Belongs to the NifW family. As to quaternary structure, homotrimer; associates with NifD.

In terms of biological role, may protect the nitrogenase Fe-Mo protein from oxidative damage. This is Nitrogenase-stabilizing/protective protein NifW from Nostoc punctiforme (strain ATCC 29133 / PCC 73102).